Reading from the N-terminus, the 624-residue chain is Chaperone protein HtpG (624 aa).

Positions 1 to 336 (MKGQETRGFQ…SSDLPLNVSR (336 aa)) are a; substrate-binding. Positions 337-552 (EILQDSTVTR…ADEMSTQMAK (216 aa)) are b. Residues 553–624 (LFAAAGQKVP…IRRMNQLLVS (72 aa)) form a c region.

It belongs to the heat shock protein 90 family. As to quaternary structure, homodimer.

Its subcellular location is the cytoplasm. Its function is as follows. Molecular chaperone. Has ATPase activity. This Escherichia coli O1:K1 / APEC protein is Chaperone protein HtpG.